Here is a 152-residue protein sequence, read N- to C-terminus: Small ribosomal subunit protein bS16 (152 aa).

The segment covering 118–130 has biased composition (basic and acidic residues); sequence AEKHKAKASEKKA. The segment at 118 to 152 is disordered; the sequence is AEKHKAKASEKKAAAAASADEAGSAAADDAEGSES. Residues 131-144 show a composition bias toward low complexity; sequence AAAASADEAGSAAA.

Belongs to the bacterial ribosomal protein bS16 family.

This Beutenbergia cavernae (strain ATCC BAA-8 / DSM 12333 / CCUG 43141 / JCM 11478 / NBRC 16432 / NCIMB 13614 / HKI 0122) protein is Small ribosomal subunit protein bS16.